Reading from the N-terminus, the 313-residue chain is MVNRRKISIIGAGHTGGTLAFILAQKELGDIVLIERQQSEGMAKGKALDILESGPIWGFDTSVHGSVNIEDIKDSDIVVMTAGIPRKSGMTREELVQTNEQIVRETALQIATYAPHSIIIVLTNPVDVMTYTAFKASGFPKERIIGQSGILDAARYRTFIAQELNVSVKDVNGFVLGGHGDTMLPLINNTHINGIPVKHLISEEKIDQIVERTRKGGAEIVALLGQGSAYYAPATAIYETIDAIFNDRKRLLPSIAYLEGEYGCSDICFGVPTIIGYQGIEKIIEVDMNNDEYQQLQHSAQAVSEVKNSLKFK.

11–16 (GAGHTG) lines the NAD(+) pocket. Substrate contacts are provided by Arg-86 and Arg-92. Residues Asn-99 and 122 to 124 (LTN) contribute to the NAD(+) site. Asn-124 and Arg-155 together coordinate substrate. His-179 functions as the Proton acceptor in the catalytic mechanism.

It belongs to the LDH/MDH superfamily. MDH type 3 family.

It carries out the reaction (S)-malate + NAD(+) = oxaloacetate + NADH + H(+). Functionally, catalyzes the reversible oxidation of malate to oxaloacetate. The chain is Malate dehydrogenase from Staphylococcus epidermidis (strain ATCC 35984 / DSM 28319 / BCRC 17069 / CCUG 31568 / BM 3577 / RP62A).